A 213-amino-acid chain; its full sequence is U1 small nuclear ribonucleoprotein C (213 aa).

The Matrin-type zinc finger occupies 4–36; the sequence is YYCDYCDTYLTHDSPSVRKQHNAGYKHKANVRS. Residues 143-166 show a composition bias toward pro residues; the sequence is APSMPMPPLNSLPRPPTMNVPPAV. Residues 143–213 form a disordered region; it reads APSMPMPPLN…INAQGPEANH (71 aa). Residues 167 to 180 are compositionally biased toward low complexity; sequence PGSTSTPTSGGAPS.

Belongs to the U1 small nuclear ribonucleoprotein C family. In terms of assembly, U1 snRNP is composed of the 7 core Sm proteins B/B', D1, D2, D3, E, F and G that assemble in a heptameric protein ring on the Sm site of the small nuclear RNA to form the core snRNP, and at least 3 U1 snRNP-specific proteins U1-70K, U1-A and U1-C. U1-C interacts with U1 snRNA and the 5' splice-site region of the pre-mRNA.

It is found in the nucleus. In terms of biological role, component of the spliceosomal U1 snRNP, which is essential for recognition of the pre-mRNA 5' splice-site and the subsequent assembly of the spliceosome. U1-C is directly involved in initial 5' splice-site recognition for both constitutive and regulated alternative splicing. The interaction with the 5' splice-site seems to precede base-pairing between the pre-mRNA and the U1 snRNA. Stimulates commitment or early (E) complex formation by stabilizing the base pairing of the 5' end of the U1 snRNA and the 5' splice-site region. The sequence is that of U1 small nuclear ribonucleoprotein C from Vitis vinifera (Grape).